The chain runs to 400 residues: Putative C-type lectin domain family 20 member A (400 aa).

A signal peptide spans 1 to 20; it reads MLPRALLLSFCAAALQLVSS. C-type lectin domains follow at residues 26 to 131 and 159 to 275; these read LVKE…FLCY and ISGQ…FFCF. 4 disulfides stabilise this stretch: Cys40–Cys130, Cys105–Cys122, Cys180–Cys274, and Cys248–Cys266. The disordered stretch occupies residues 287–346; that stretch reads ELPPLFHTSPTEMTEETTPRPGRAVASVGSGTDRRDTAAATEAQHLSSESKEKTSAQKSG.

This chain is Putative C-type lectin domain family 20 member A, found in Homo sapiens (Human).